Here is a 454-residue protein sequence, read N- to C-terminus: Replicative DNA helicase DnaB (454 aa).

An N-terminal domain (NTD) region spans residues 1–149; the sequence is MSELFSERIP…LDEADRKIME (149 aa). The interval 163-176 is linker helix; sequence KDILVQTYDNIEML. One can recognise an SF4 helicase domain in the interval 179 to 445; it reads RDGEITGIPT…NKFVNLERRF (267 aa). Residues 183–454 form a C-terminal domain (CTD) region; that stretch reads ITGIPTGFTE…FDEAQIPPGA (272 aa). 5 residues coordinate ATP: S213, G215, K216, T217, and A218. Residue E241 is the Nucleophile of the active site. Residues R250 and Q362 each coordinate ATP. The ssDNA site is built by R381, E382, and G384. The ATP site is built by K418, Q419, and R420.

This sequence belongs to the helicase family. DnaB subfamily. Homohexamer. Interacts with DnaG primase, as DnaB(6):DnaG(3). Interacts with the N-terminus of DnaI (shown with DnaI of B.subtilis), forms a helicase DnaB(6):DnaI(6) complex. The DnaB-DnaI complex is disrupted by DnaD (DnaD and DnaI from B.subtilis). A stable complex DnaI(6):DnaB(6):DnaG(3) fragment can be isolated; DnaI and DnaG do not contact each other (DnaI in this complex is derived from B.subtilis). Forms a complex with DNA clamp loader protein tau (shown with B.subtilis HolA) tau(3):DnaB(6); a single ATP hydrolysis even is sufficient for complex formation.

The catalysed reaction is Couples ATP hydrolysis with the unwinding of duplex DNA at the replication fork by translocating in the 5'-3' direction. This creates two antiparallel DNA single strands (ssDNA). The leading ssDNA polymer is the template for DNA polymerase III holoenzyme which synthesizes a continuous strand.. It catalyses the reaction ATP + H2O = ADP + phosphate + H(+). Functionally, the main replicative DNA helicase, it participates in initiation and elongation during chromosome replication. Travels ahead of the DNA replisome, separating double-stranded (ds)DNA into templates for DNA synthesis. Binding of single-stranded (ss)DNA to the hexamer suggests a 2-nucleotide step size for the helicase and a hand-over-hand mechanism of DNA unwinding. Has ssDNA-stimulated ATPase activity. DnaG primase stimulates the helicase activity (the helicase direction was not determine but is probably 5'-3'). Loaded onto DNA by helicase loader DnaI (shown with DnaI of B.subtilis); ATP-binding enhances loading and subsequent ATP hydrolysis dissociates the complex, leaving helicase on the DNA. Binds ssDNA and less well dsDNA, in the presence of ADPNP (probably 5'-adenylyl beta, gamma-imidodiphosphate, but not ATP) binding to both DNAs is improved. The sequence is that of Replicative DNA helicase DnaB from Geobacillus stearothermophilus (Bacillus stearothermophilus).